The following is a 339-amino-acid chain: tRNA N6-adenosine threonylcarbamoyltransferase (339 aa).

Residues His-114 and His-118 each contribute to the Fe cation site. Residues 137–141 (VVSGG), Asp-170, Gly-183, Asp-187, and Asn-277 each bind substrate. Asp-305 provides a ligand contact to Fe cation.

The protein belongs to the KAE1 / TsaD family. The cofactor is Fe(2+).

It is found in the cytoplasm. The catalysed reaction is L-threonylcarbamoyladenylate + adenosine(37) in tRNA = N(6)-L-threonylcarbamoyladenosine(37) in tRNA + AMP + H(+). Functionally, required for the formation of a threonylcarbamoyl group on adenosine at position 37 (t(6)A37) in tRNAs that read codons beginning with adenine. Is involved in the transfer of the threonylcarbamoyl moiety of threonylcarbamoyl-AMP (TC-AMP) to the N6 group of A37, together with TsaE and TsaB. TsaD likely plays a direct catalytic role in this reaction. This is tRNA N6-adenosine threonylcarbamoyltransferase from Clostridium perfringens (strain SM101 / Type A).